A 184-amino-acid polypeptide reads, in one-letter code: Transcription termination/antitermination protein NusG (184 aa).

The KOW domain maps to 133–163 (EGDQVRVVSGPFADFTGTVTEINPERGKVKV).

The protein belongs to the NusG family.

Functionally, participates in transcription elongation, termination and antitermination. This Thermus thermophilus (strain ATCC 27634 / DSM 579 / HB8) protein is Transcription termination/antitermination protein NusG.